The following is a 501-amino-acid chain: Lysine--tRNA ligase (501 aa).

The Mg(2+) site is built by Glu411 and Glu418.

The protein belongs to the class-II aminoacyl-tRNA synthetase family. In terms of assembly, homodimer. It depends on Mg(2+) as a cofactor.

It localises to the cytoplasm. The catalysed reaction is tRNA(Lys) + L-lysine + ATP = L-lysyl-tRNA(Lys) + AMP + diphosphate. The chain is Lysine--tRNA ligase from Pseudomonas aeruginosa (strain LESB58).